Consider the following 216-residue polypeptide: Adenylate kinase (216 aa).

Position 10–15 (10–15 (GAGKGT)) interacts with ATP. The NMP stretch occupies residues 30 to 59 (STGDIFRYNIKQGTELGKKAKSYMDQGLLV). AMP contacts are provided by residues Thr-31, Arg-36, 57–59 (LLV), 85–88 (GFPR), and Gln-92. The segment at 126–163 (GRRICRECGATFHVQYNPSTKGALCDQCGGELYQRDDD) is LID. Arg-127 provides a ligand contact to ATP. Positions 130 and 133 each coordinate Zn(2+). Position 136 to 137 (136 to 137 (TF)) interacts with ATP. The Zn(2+) site is built by Cys-150 and Cys-153. Residues Arg-160 and Arg-171 each coordinate AMP. Residue Lys-199 coordinates ATP.

This sequence belongs to the adenylate kinase family. As to quaternary structure, monomer.

It localises to the cytoplasm. The catalysed reaction is AMP + ATP = 2 ADP. It functions in the pathway purine metabolism; AMP biosynthesis via salvage pathway; AMP from ADP: step 1/1. Functionally, catalyzes the reversible transfer of the terminal phosphate group between ATP and AMP. Plays an important role in cellular energy homeostasis and in adenine nucleotide metabolism. The chain is Adenylate kinase from Alkaliphilus oremlandii (strain OhILAs) (Clostridium oremlandii (strain OhILAs)).